Reading from the N-terminus, the 211-residue chain is MLELFRKKKVEPPKITVTLTDLMMFLPTLRKHVIPYQIKCDYCSGIVTDANGFVLYRRIPIPDAVLRALINFSNAIDQQLKDTIFYFSMAKREVIGRMVYKAKLNALKKGNTKNIQKITAELPRLLYRILYPYKATTSILYIDGAVYPDIVDFVALREEEKTYISNNFSFYLYADSSYVYAIMLTTREQILRIKTLLANRDVPLRSLDGQQ.

This is an uncharacterized protein from Acidianus convivator (ATV).